Here is a 120-residue protein sequence, read N- to C-terminus: NAD(P)H-quinone oxidoreductase subunit 3, chloroplastic (120 aa).

3 helical membrane passes run 10–30 (FWFFLIIGAIIPTLAFTTSKL), 64–84 (MFALVFVIFDVETIFLYPWAM), and 89–109 (LGVYGFIEALIFVLILVIGLV).

This sequence belongs to the complex I subunit 3 family. NDH is composed of at least 16 different subunits, 5 of which are encoded in the nucleus.

Its subcellular location is the plastid. The protein localises to the chloroplast thylakoid membrane. It carries out the reaction a plastoquinone + NADH + (n+1) H(+)(in) = a plastoquinol + NAD(+) + n H(+)(out). The enzyme catalyses a plastoquinone + NADPH + (n+1) H(+)(in) = a plastoquinol + NADP(+) + n H(+)(out). Functionally, NDH shuttles electrons from NAD(P)H:plastoquinone, via FMN and iron-sulfur (Fe-S) centers, to quinones in the photosynthetic chain and possibly in a chloroplast respiratory chain. The immediate electron acceptor for the enzyme in this species is believed to be plastoquinone. Couples the redox reaction to proton translocation, and thus conserves the redox energy in a proton gradient. In Chaetosphaeridium globosum (Charophycean green alga), this protein is NAD(P)H-quinone oxidoreductase subunit 3, chloroplastic.